Consider the following 433-residue polypeptide: LanC-like protein GCL1 (433 aa).

Residues 1–22 (MSSSVDFVTEQGRCGDDGNGAG) are disordered.

Belongs to the LanC-like protein family.

May play a role in signaling. May be not involved in abscisic acid (ABA) signaling. The chain is LanC-like protein GCL1 (GCL1) from Arabidopsis thaliana (Mouse-ear cress).